The sequence spans 846 residues: DNA mismatch repair protein MutS (846 aa).

610–617 is a binding site for ATP; the sequence is GPNMGGKS.

This sequence belongs to the DNA mismatch repair MutS family.

Functionally, this protein is involved in the repair of mismatches in DNA. It is possible that it carries out the mismatch recognition step. This protein has a weak ATPase activity. This is DNA mismatch repair protein MutS from Legionella pneumophila (strain Paris).